An 89-amino-acid chain; its full sequence is Ribonuclease P protein component 1 (89 aa).

Belongs to the eukaryotic/archaeal RNase P protein component 1 family. As to quaternary structure, consists of a catalytic RNA component and at least 4-5 protein subunits.

It is found in the cytoplasm. The catalysed reaction is Endonucleolytic cleavage of RNA, removing 5'-extranucleotides from tRNA precursor.. In terms of biological role, part of ribonuclease P, a protein complex that generates mature tRNA molecules by cleaving their 5'-ends. The sequence is that of Ribonuclease P protein component 1 from Thermoplasma volcanium (strain ATCC 51530 / DSM 4299 / JCM 9571 / NBRC 15438 / GSS1).